Reading from the N-terminus, the 321-residue chain is MFHGIKGCMIPMYWWLLGDLDLNGVRNSASSYSGGVNLSKLAVGLDLSEPASSKWSSTTSVKFEVPGHYLLQTLYMCVRLTMTDGRYQRSGRISYNMQNSLLCSGNTHDSMVVLKQESRFAKATDQGLSHFSMQIEQGIPVVSNWLIFNRFKFVASKGVRFGPAFPLASLTGGSIVGDMTPYQAFAIGGLGSVRGYGEVAVGSGRSCLVANTELANKMTEGTIFLDCGTDLGSSRLVPVSSLYLLRTRTIKKLLRHENDKAVAELVSGNPSLRQGKPGFGYGFGYGLRFKSPLGHLQVDYAMNAFNQKTLYFGITNLASST.

The protein belongs to the OEP80 (TC 1.B.33.2) family. In terms of tissue distribution, expressed in germinating seeds.

It is found in the plastid. The protein resides in the chloroplast outer membrane. May play a role during plastid development. The chain is Outer envelope protein 36, chloroplastic from Arabidopsis thaliana (Mouse-ear cress).